A 499-amino-acid polypeptide reads, in one-letter code: Probable cytosol aminopeptidase (499 aa).

2 residues coordinate Mn(2+): Lys-269 and Asp-274. Residue Lys-281 is part of the active site. Mn(2+) is bound by residues Asp-292, Asp-351, and Glu-353. Arg-355 is a catalytic residue.

This sequence belongs to the peptidase M17 family. The cofactor is Mn(2+).

Its subcellular location is the cytoplasm. It catalyses the reaction Release of an N-terminal amino acid, Xaa-|-Yaa-, in which Xaa is preferably Leu, but may be other amino acids including Pro although not Arg or Lys, and Yaa may be Pro. Amino acid amides and methyl esters are also readily hydrolyzed, but rates on arylamides are exceedingly low.. It carries out the reaction Release of an N-terminal amino acid, preferentially leucine, but not glutamic or aspartic acids.. Presumably involved in the processing and regular turnover of intracellular proteins. Catalyzes the removal of unsubstituted N-terminal amino acids from various peptides. This Actinobacillus pleuropneumoniae serotype 3 (strain JL03) protein is Probable cytosol aminopeptidase.